An 82-amino-acid chain; its full sequence is Cytochrome b-c1 complex subunit 8 (82 aa).

The Mitochondrial matrix segment spans residues 1 to 43 (MGREFGNLARIRHVISYSLSPFEQRAFPSYFSKGIPNVLRRTR). Ser-16 bears the Phosphoserine mark. N6-acetyllysine; alternate is present on Lys-33. At Lys-33 the chain carries N6-succinyllysine; alternate. A helical transmembrane segment spans residues 44-62 (ERILRVAPPFVVVYLIYTW). At 63–82 (GNQEFEQSKRKNPAMYENDK) the chain is on the mitochondrial intermembrane side.

This sequence belongs to the UQCRQ/QCR8 family. In terms of assembly, component of the ubiquinol-cytochrome c oxidoreductase (cytochrome b-c1 complex, complex III, CIII), a multisubunit enzyme composed of 11 subunits. The complex is composed of 3 respiratory subunits cytochrome b, cytochrome c1 and Rieske protein UQCRFS1, 2 core protein subunits UQCRC1/QCR1 and UQCRC2/QCR2, and 6 low-molecular weight protein subunits UQCRH/QCR6, UQCRB/QCR7, UQCRQ/QCR8, UQCR10/QCR9, UQCR11/QCR10 and subunit 9, the cleavage product of Rieske protein UQCRFS1. The complex exists as an obligatory dimer and forms supercomplexes (SCs) in the inner mitochondrial membrane with NADH-ubiquinone oxidoreductase (complex I, CI) and cytochrome c oxidase (complex IV, CIV), resulting in different assemblies (supercomplex SCI(1)III(2)IV(1) and megacomplex MCI(2)III(2)IV(2)). Interacts with UQCC6.

The protein resides in the mitochondrion inner membrane. Its function is as follows. Component of the ubiquinol-cytochrome c oxidoreductase, a multisubunit transmembrane complex that is part of the mitochondrial electron transport chain which drives oxidative phosphorylation. The respiratory chain contains 3 multisubunit complexes succinate dehydrogenase (complex II, CII), ubiquinol-cytochrome c oxidoreductase (cytochrome b-c1 complex, complex III, CIII) and cytochrome c oxidase (complex IV, CIV), that cooperate to transfer electrons derived from NADH and succinate to molecular oxygen, creating an electrochemical gradient over the inner membrane that drives transmembrane transport and the ATP synthase. The cytochrome b-c1 complex catalyzes electron transfer from ubiquinol to cytochrome c, linking this redox reaction to translocation of protons across the mitochondrial inner membrane, with protons being carried across the membrane as hydrogens on the quinol. In the process called Q cycle, 2 protons are consumed from the matrix, 4 protons are released into the intermembrane space and 2 electrons are passed to cytochrome c. In Mus musculus (Mouse), this protein is Cytochrome b-c1 complex subunit 8 (Uqcrq).